A 191-amino-acid chain; its full sequence is dTTP/UTP pyrophosphatase (191 aa).

The active-site Proton acceptor is the Asp-71.

Belongs to the Maf family. YhdE subfamily. A divalent metal cation is required as a cofactor.

Its subcellular location is the cytoplasm. It catalyses the reaction dTTP + H2O = dTMP + diphosphate + H(+). It carries out the reaction UTP + H2O = UMP + diphosphate + H(+). Nucleoside triphosphate pyrophosphatase that hydrolyzes dTTP and UTP. May have a dual role in cell division arrest and in preventing the incorporation of modified nucleotides into cellular nucleic acids. In Geobacter sulfurreducens (strain ATCC 51573 / DSM 12127 / PCA), this protein is dTTP/UTP pyrophosphatase.